The following is a 343-amino-acid chain: Tribbles homolog 2 (343 aa).

The disordered stretch occupies residues 25–50 (EELSSIRSAEPSQSFSPNLGSPSPPE). The span at 29–45 (SIRSAEPSQSFSPNLGS) shows a compositional bias: polar residues. One can recognise a Protein kinase domain in the interval 61–308 (IGKYLLLEPL…SQEILDHPWF (248 aa)).

Belongs to the protein kinase superfamily. CAMK Ser/Thr protein kinase family. Tribbles subfamily. As to expression, expressed in granulosa cells of the dominant follicles of the ovary and down-regulated in ovulatory follicles.

Its subcellular location is the cytoplasm. It localises to the cytoskeleton. In terms of biological role, interacts with MAPK kinases and regulates activation of MAP kinases. Does not display kinase activity. This is Tribbles homolog 2 from Bos taurus (Bovine).